The primary structure comprises 208 residues: Sexual inducer glycoprotein (208 aa).

A signal peptide spans 1 to 11; that stretch reads MAVVVVNSATA. 6 N-linked (GlcNAc...) asparagine glycosylation sites follow: Asn-89, Asn-119, Asn-131, Asn-139, Asn-146, and Asn-188.

In terms of biological role, the sexual inducer is a glycoprotein synthesized and released by sexual males at about the time they release sperm packets. It is one of the most potent biological effector molecules known: it exhibits full effectiveness in converting asexually growing males and females to the sexual pathway at about 10(-7) m. The polypeptide is Sexual inducer glycoprotein (Volvox carteri (Green alga)).